The following is a 150-amino-acid chain: MSTTTEVIAHHWAFAVFLIGAIGLCGLMLLGAFFLGGRARARAKNVPYESGIDSVGSARMRLSAKFYLVAMFFVIFDVEALYLYAWSISIRESGWIGFIEATIFILVLLAGLVYLVRIGALDWTPGRSNRRVSKPSIVKYASSHPDIPKN.

Transmembrane regions (helical) follow at residues 14–34 (FAVF…GAFF), 66–86 (FYLV…LYAW), and 96–116 (IGFI…VYLV).

This sequence belongs to the complex I subunit 3 family. In terms of assembly, NDH-1 is composed of 13 different subunits. Subunits NuoA, H, J, K, L, M, N constitute the membrane sector of the complex.

It is found in the cell inner membrane. It catalyses the reaction a quinone + NADH + 5 H(+)(in) = a quinol + NAD(+) + 4 H(+)(out). In terms of biological role, NDH-1 shuttles electrons from NADH, via FMN and iron-sulfur (Fe-S) centers, to quinones in the respiratory chain. The immediate electron acceptor for the enzyme in this species is believed to be ubiquinone. Couples the redox reaction to proton translocation (for every two electrons transferred, four hydrogen ions are translocated across the cytoplasmic membrane), and thus conserves the redox energy in a proton gradient. This is NADH-quinone oxidoreductase subunit A from Yersinia enterocolitica serotype O:8 / biotype 1B (strain NCTC 13174 / 8081).